A 222-amino-acid polypeptide reads, in one-letter code: Dual specificity phosphatase 29 (222 aa).

The Tyrosine-protein phosphatase domain maps to histidine 54–glutamine 202. Histidine 146 to arginine 153 is a substrate binding site. Cysteine 147 functions as the Phosphocysteine intermediate in the catalytic mechanism. Positions valine 201–proline 222 are disordered. Over residues histidine 209 to proline 222 the composition is skewed to basic and acidic residues.

Belongs to the protein-tyrosine phosphatase family. Non-receptor class dual specificity subfamily. Homodimer. Interacts with PRKAA2.

The protein localises to the cytoplasm. It localises to the nucleus. The enzyme catalyses O-phospho-L-tyrosyl-[protein] + H2O = L-tyrosyl-[protein] + phosphate. The catalysed reaction is O-phospho-L-seryl-[protein] + H2O = L-seryl-[protein] + phosphate. It catalyses the reaction O-phospho-L-threonyl-[protein] + H2O = L-threonyl-[protein] + phosphate. In terms of biological role, dual specificity phosphatase able to dephosphorylate phosphotyrosine, phosphoserine and phosphothreonine residues within the same substrate, with a preference for phosphotyrosine as a substrate. Involved in the modulation of intracellular signaling cascades. In skeletal muscle regulates systemic glucose homeostasis by activating, AMPK, an energy sensor protein kinase. Affects MAP kinase signaling though modulation of the MAPK1/2 cascade in skeletal muscle promoting muscle cell differentiation, development and atrophy. The sequence is that of Dual specificity phosphatase 29 (DUSP29) from Sus scrofa (Pig).